Reading from the N-terminus, the 155-residue chain is Large ribosomal subunit protein uL15 (155 aa).

The disordered stretch occupies residues 1 to 63 (MKLHELAPNP…QMPLTRRLPK (63 aa)). Composition is skewed to gly residues over residues 21–31 (RGIGSGLGKTS) and 42–52 (SGGGVRPGFEG).

This sequence belongs to the universal ribosomal protein uL15 family. As to quaternary structure, part of the 50S ribosomal subunit.

Binds to the 23S rRNA. In Symbiobacterium thermophilum (strain DSM 24528 / JCM 14929 / IAM 14863 / T), this protein is Large ribosomal subunit protein uL15.